The following is a 270-amino-acid chain: uncharacterized protein (270 aa).

This is an uncharacterized protein from Aquifex aeolicus (strain VF5).